Reading from the N-terminus, the 350-residue chain is Dihydroorotate dehydrogenase (quinone) (350 aa).

Residues 65–69 (AGLDK) and threonine 89 each bind FMN. Position 69 (lysine 69) interacts with substrate. Residue 114–118 (NRLGF) coordinates substrate. Asparagine 149 and asparagine 182 together coordinate FMN. Asparagine 182 is a substrate binding site. Serine 185 acts as the Nucleophile in catalysis. Asparagine 187 lines the substrate pocket. The FMN site is built by lysine 227 and threonine 255. 256–257 (NT) contacts substrate. FMN-binding positions include glycine 278, glycine 307, and 328–329 (YT).

Belongs to the dihydroorotate dehydrogenase family. Type 2 subfamily. As to quaternary structure, monomer. FMN is required as a cofactor.

The protein resides in the cell membrane. It carries out the reaction (S)-dihydroorotate + a quinone = orotate + a quinol. The protein operates within pyrimidine metabolism; UMP biosynthesis via de novo pathway; orotate from (S)-dihydroorotate (quinone route): step 1/1. In terms of biological role, catalyzes the conversion of dihydroorotate to orotate with quinone as electron acceptor. This is Dihydroorotate dehydrogenase (quinone) from Polaromonas naphthalenivorans (strain CJ2).